A 1050-amino-acid chain; its full sequence is Diacylglycerol kinase iota (1050 aa).

Disordered stretches follow at residues 52-73 and 325-356; these read NPSS…SGSG and PQNS…ENKG. Over residues 332–347 the composition is skewed to basic residues; that stretch reads SNRKKKRTSFKRKASK. The region spanning 367-502 is the DAGKc domain; it reads PLMKPLLVFV…DRWNLHVERN (136 aa). ANK repeat units follow at residues 943-972 and 979-1008; these read GHCS…AELL and TGET…SLRQ. A PDZ-binding motif is present at residues 1048–1050; the sequence is TAV.

This sequence belongs to the eukaryotic diacylglycerol kinase family. In terms of assembly, interacts (via PDZ-binding motif) with DLG4; controls the localization of DGKI to the synapse. Interacts (via PDZ-binding motif) with DLG1. Interacts (via PDZ-binding motif) with DLG2. Interacts (via PDZ-binding motif) with DLG3. May interact with RASGRP3; involved in the regulation of RASGRP3 activity. In terms of tissue distribution, specifically expressed in brain (at protein level). Expressed in hippocampus, cerebellum, brain stem and spinal cord (at protein level). Highly expressed in hippocampus, cerebellar cortex, olfactory bulb, and olfactory tubercle and to lower extent in the cerebral cortex, caudate putamen, and thalamus. Not detected in the white matter. Also expressed in eye. As to expression, major isoform in brain (at protein level). Minor isoform in brain (at protein level). In terms of tissue distribution, expressed in brain (at protein level).

The protein localises to the cell projection. Its subcellular location is the axon. The protein resides in the dendrite. It localises to the presynapse. It is found in the postsynapse. The protein localises to the postsynaptic density. Its subcellular location is the synaptic cell membrane. The protein resides in the cytoplasmic vesicle. It localises to the secretory vesicle. It is found in the synaptic vesicle membrane. The protein localises to the cytoplasm. Its subcellular location is the cytosol. The protein resides in the nucleus. It catalyses the reaction a 1,2-diacyl-sn-glycerol + ATP = a 1,2-diacyl-sn-glycero-3-phosphate + ADP + H(+). The catalysed reaction is 1,2-di-(9Z-octadecenoyl)-sn-glycerol + ATP = 1,2-di-(9Z-octadecenoyl)-sn-glycero-3-phosphate + ADP + H(+). It carries out the reaction 1-octadecanoyl-2-(9Z,12Z)-octadecadienoyl-sn-glycerol + ATP = 1-octadecanoyl-2-(9Z,12Z-octadecadienoyl)-sn-glycero-3-phosphate + ADP + H(+). The enzyme catalyses 1-octadecanoyl-2-(5Z,8Z,11Z,14Z-eicosatetraenoyl)-sn-glycerol + ATP = 1-octadecanoyl-2-(5Z,8Z,11Z,14Z-eicosatetraenoyl)-sn-glycero-3-phosphate + ADP + H(+). The protein operates within lipid metabolism; glycerolipid metabolism. Its activity is regulated as follows. Activated by phosphatidylserine. In terms of biological role, diacylglycerol kinase that converts diacylglycerol/DAG into phosphatidic acid/phosphatidate/PA and regulates the respective levels of these two bioactive lipids. Thereby, acts as a central switch between the signaling pathways activated by these second messengers with different cellular targets and opposite effects in numerous biological processes. Has probably no preference for any of the diacylglycerols in terms of the acyl chain composition, especially for the acyl chain at the sn-2 position. By controlling the diacylglycerol/DAG-mediated activation of RASGRP3, negatively regulates the Rap1 signaling pathway. May play a role in presynaptic diacylglycerol/DAG signaling and control neurotransmitter release during metabotropic glutamate receptor-dependent long-term depression. Has a decreased affinity for ATP and a reduced diacylglycerol kinase activity. Has no preference for any of the diacylglycerols in terms of the acyl chain composition. Functionally, has no diacylglycerol kinase activity. This is Diacylglycerol kinase iota from Rattus norvegicus (Rat).